Consider the following 519-residue polypeptide: MHQQVIIFDTTLRDGEQSLQTSLSVKEKLQIAFALEKLGVDVMEVGFPISSPGDFESVHTIAQNIQNSCVCGLARCLEKDIDIAAEALKSAKKFRIHIFLPTSAIHIQSKLRKNFDQIIDMTTHSIRYARKYTDDVEFSCEDAGRTSIDNLCRIVEIAIKSGARTINIPDTVGYTIPNQFSEIIYSLYKKVPIIDQAIISVHCHDDLGMAVGNSISAIQAGARQIEGTINGIGERAGNTALEEIIMAIKIRHDLLHVYTNIHHHEIYQTSQVVSQLCNMPIPANKAIVGSNAFSHSSGIHQDGVLKNKKNYEIMNPKNIGLKKVQLNLTSRSGRAAVKYHMEKMGYQEHDYNIDELYKVFLKLADQKGRVFNYELEALAFTKYSQEYLEYFALESFHIHSTSSALSNAIINLYCGKEKKIHSCSTTGRGPIDAAYKALTLISKLPIKLEKYQLHSKKYEYNILGQVNIIVSYQGRHFHGIGSNIDIIKASIIAMIQALNNIWQTKQITINHKNTQHIKK.

A Pyruvate carboxyltransferase domain is found at 5–267; the sequence is VIIFDTTLRD…YTNIHHHEIY (263 aa). Mn(2+) is bound by residues Asp-14, His-202, His-204, and Asn-238. Residues 392–519 are regulatory domain; it reads ALESFHIHST…NHKNTQHIKK (128 aa).

The protein belongs to the alpha-IPM synthase/homocitrate synthase family. LeuA type 1 subfamily. Homodimer. Mn(2+) serves as cofactor.

The protein localises to the cytoplasm. The catalysed reaction is 3-methyl-2-oxobutanoate + acetyl-CoA + H2O = (2S)-2-isopropylmalate + CoA + H(+). The protein operates within amino-acid biosynthesis; L-leucine biosynthesis; L-leucine from 3-methyl-2-oxobutanoate: step 1/4. Catalyzes the condensation of the acetyl group of acetyl-CoA with 3-methyl-2-oxobutanoate (2-ketoisovalerate) to form 3-carboxy-3-hydroxy-4-methylpentanoate (2-isopropylmalate). The chain is 2-isopropylmalate synthase from Blochmanniella floridana.